The primary structure comprises 435 residues: Methylenetetrahydrofolate--tRNA-(uracil-5-)-methyltransferase TrmFO (435 aa).

7–12 (GAGLAG) provides a ligand contact to FAD.

It belongs to the MnmG family. TrmFO subfamily. FAD is required as a cofactor.

It localises to the cytoplasm. It carries out the reaction uridine(54) in tRNA + (6R)-5,10-methylene-5,6,7,8-tetrahydrofolate + NADH + H(+) = 5-methyluridine(54) in tRNA + (6S)-5,6,7,8-tetrahydrofolate + NAD(+). The catalysed reaction is uridine(54) in tRNA + (6R)-5,10-methylene-5,6,7,8-tetrahydrofolate + NADPH + H(+) = 5-methyluridine(54) in tRNA + (6S)-5,6,7,8-tetrahydrofolate + NADP(+). Catalyzes the folate-dependent formation of 5-methyl-uridine at position 54 (M-5-U54) in all tRNAs. This chain is Methylenetetrahydrofolate--tRNA-(uracil-5-)-methyltransferase TrmFO, found in Thermotoga sp. (strain RQ2).